Consider the following 735-residue polypeptide: Ion-translocating oxidoreductase complex subunit C (735 aa).

2 consecutive 4Fe-4S ferredoxin-type domains span residues 368 to 397 and 407 to 436; these read MGAPQEEKSCIRCSACADACPADLLPQQLY and KATAHHIADCIECGACAWVCPSNIPLVQYF. [4Fe-4S] cluster contacts are provided by cysteine 377, cysteine 380, cysteine 383, cysteine 387, cysteine 416, cysteine 419, cysteine 422, and cysteine 426. Residues 538–715 form a disordered region; sequence KQAAHPMADS…PADPRKAAVA (178 aa). The segment covering 556-565 has biased composition (low complexity); that stretch reads KAAVEAAIAR.

Belongs to the 4Fe4S bacterial-type ferredoxin family. RnfC subfamily. In terms of assembly, the complex is composed of six subunits: RsxA, RsxB, RsxC, RsxD, RsxE and RsxG. The cofactor is [4Fe-4S] cluster.

It is found in the cell inner membrane. In terms of biological role, part of a membrane-bound complex that couples electron transfer with translocation of ions across the membrane. Required to maintain the reduced state of SoxR. This chain is Ion-translocating oxidoreductase complex subunit C, found in Salmonella typhimurium (strain LT2 / SGSC1412 / ATCC 700720).